The following is a 93-amino-acid chain: SH3 domain-binding glutamic acid-rich-like protein 3 (93 aa).

An N-acetylserine modification is found at Ser-2. One can recognise a Glutaredoxin domain in the interval 2 to 93 (SGLRVYSTSV…NTLQEFLKLA (92 aa)). Thr-9 is a glycosylation site (O-linked (GalNAc...) threonine).

It belongs to the SH3BGR family. In terms of assembly, interacts with MYO1C (via its IQ motifs); the interaction is dependent on calcium and takes place at membrane ruffles. Post-translationally, may be glycosylated. As to expression, expressed in heart, liver, lung, kidney, spleen, thymus, ovarian follicles, skeletal muscle, brain, lymph node and mammary epithelial and stromal cells (at protein level).

It is found in the cytoplasm. The protein resides in the cytosol. It localises to the cell projection. Its subcellular location is the ruffle membrane. The protein localises to the nucleus. In terms of biological role, could act as a modulator of glutaredoxin biological activity. May play a role in cytoskeleton organization. This is SH3 domain-binding glutamic acid-rich-like protein 3 from Rattus norvegicus (Rat).